A 193-amino-acid polypeptide reads, in one-letter code: Naphthalene 1,2-dioxygenase system, small oxygenase component (193 aa).

This sequence belongs to the bacterial ring-hydroxylating dioxygenase beta subunit family. In terms of assembly, the naphthalene dioxygenase (NDO) multicomponent enzyme system is composed of an electron transfer component and a dioxygenase component (iron sulfur protein (ISP)). The electron transfer component is composed of a ferredoxin reductase (NdoR) and a ferredoxin (NdoA), and the dioxygenase component is formed of a heterohexamer (trimer of heterodimers) of three large alpha subunits (NdoB) and three small beta subunits (NdoC).

Its pathway is aromatic compound metabolism; naphthalene degradation. Component of the naphthalene dioxygenase (NDO) multicomponent enzyme system which catalyzes the incorporation of both atoms of molecular oxygen into naphthalene to form cis-(1R,2S)-dihydroxy-1,2-dihydronaphthalene. The beta subunit seems to have a structural role in the holoenzyme. This Pseudomonas aeruginosa protein is Naphthalene 1,2-dioxygenase system, small oxygenase component.